The following is a 490-amino-acid chain: Katanin p60 ATPase-containing subunit A-like 1 (490 aa).

M1 is subject to N-acetylmethionine. The tract at residues 95–184 is disordered; it reads DPAVWPPPVP…DGEMPKFDGA (90 aa). A compositionally biased stretch (basic and acidic residues) spans 116 to 127; sequence PNREVRPLRKEM. Low complexity predominate over residues 128–139; the sequence is AGVGARGPVGRA. A compositionally biased stretch (basic and acidic residues) spans 143-169; sequence SKSEKPSTSRDKDYRARGRDDKGRKNM. Phosphoserine is present on S174. Residue 248-255 participates in ATP binding; that stretch reads GPPGTGKT.

This sequence belongs to the AAA ATPase family. Katanin p60 subunit A1 subfamily. A-like 1 sub-subfamily. Interacts with KATNB1 and KATNBL1. As to expression, expressed in testis, restricted to Sertoli cells (at protein level).

It localises to the cytoplasm. Its subcellular location is the cytoskeleton. It is found in the spindle pole. The protein localises to the spindle. The catalysed reaction is n ATP + n H2O + a microtubule = n ADP + n phosphate + (n+1) alpha/beta tubulin heterodimers.. Its function is as follows. Regulates microtubule dynamics in Sertoli cells, a process that is essential for spermiogenesis and male fertility. Severs microtubules in an ATP-dependent manner, promoting rapid reorganization of cellular microtubule arrays. Has microtubule-severing activity in vitro. The chain is Katanin p60 ATPase-containing subunit A-like 1 from Homo sapiens (Human).